The primary structure comprises 1263 residues: Valine--tRNA ligase (1263 aa).

Residue serine 2 is modified to N-acetylserine. One can recognise a GST C-terminal domain in the interval 89–219 (GSRAAVLVQQ…YSGARSVTQQ (131 aa)). The disordered stretch occupies residues 218–294 (QQPGSEVIAP…PGEKKDVSGA (77 aa)). Basic and acidic residues-rich tracts occupy residues 234-248 (LKKEAKKREKLEKFQ) and 259-274 (HGEKKPKPEKKEKRDP). The 'HIGH' region motif lies at 343-353 (PNVTGSLHLGH). A phosphoserine mark is found at serine 436 and serine 526. Lysine 644 is modified (N6-acetyllysine). Positions 861–865 (KMSKS) match the 'KMSKS' region motif. Lysine 864 is an ATP binding site.

This sequence belongs to the class-I aminoacyl-tRNA synthetase family. Forms high-molecular-mass aggregates with elongation factor 1.

It catalyses the reaction tRNA(Val) + L-valine + ATP = L-valyl-tRNA(Val) + AMP + diphosphate. With respect to regulation, can be regulated by protein kinase C-dependent phosphorylation. This Mus musculus (Mouse) protein is Valine--tRNA ligase (Vars1).